We begin with the raw amino-acid sequence, 545 residues long: Chaperonin GroEL (545 aa).

ATP contacts are provided by residues 30–33 (TLGP), K51, 87–91 (DGTTT), G415, and D495.

It belongs to the chaperonin (HSP60) family. Forms a cylinder of 14 subunits composed of two heptameric rings stacked back-to-back. Interacts with the co-chaperonin GroES.

It localises to the cytoplasm. It carries out the reaction ATP + H2O + a folded polypeptide = ADP + phosphate + an unfolded polypeptide.. Functionally, together with its co-chaperonin GroES, plays an essential role in assisting protein folding. The GroEL-GroES system forms a nano-cage that allows encapsulation of the non-native substrate proteins and provides a physical environment optimized to promote and accelerate protein folding. This Shewanella sp. (strain ANA-3) protein is Chaperonin GroEL.